A 501-amino-acid polypeptide reads, in one-letter code: Probable cytosol aminopeptidase (501 aa).

Mn(2+) contacts are provided by Lys-272 and Asp-277. Lys-284 is an active-site residue. Residues Asp-295, Asp-354, and Glu-356 each contribute to the Mn(2+) site. Residue Arg-358 is part of the active site.

It belongs to the peptidase M17 family. Mn(2+) serves as cofactor.

It localises to the cytoplasm. The enzyme catalyses Release of an N-terminal amino acid, Xaa-|-Yaa-, in which Xaa is preferably Leu, but may be other amino acids including Pro although not Arg or Lys, and Yaa may be Pro. Amino acid amides and methyl esters are also readily hydrolyzed, but rates on arylamides are exceedingly low.. It catalyses the reaction Release of an N-terminal amino acid, preferentially leucine, but not glutamic or aspartic acids.. Its function is as follows. Presumably involved in the processing and regular turnover of intracellular proteins. Catalyzes the removal of unsubstituted N-terminal amino acids from various peptides. This is Probable cytosol aminopeptidase from Buchnera aphidicola subsp. Baizongia pistaciae (strain Bp).